The sequence spans 60 residues: Large ribosomal subunit protein uL30 (60 aa).

Belongs to the universal ribosomal protein uL30 family. In terms of assembly, part of the 50S ribosomal subunit.

This chain is Large ribosomal subunit protein uL30, found in Shewanella sp. (strain ANA-3).